The primary structure comprises 93 residues: Large ribosomal subunit protein bL31 (93 aa).

The segment at 72-93 (VKTVSSNADNQKETTEELIKNK) is disordered. Positions 81 to 93 (NQKETTEELIKNK) are enriched in basic and acidic residues.

The protein belongs to the bacterial ribosomal protein bL31 family. Type A subfamily. In terms of assembly, part of the 50S ribosomal subunit.

In terms of biological role, binds the 23S rRNA. The polypeptide is Large ribosomal subunit protein bL31 (Onion yellows phytoplasma (strain OY-M)).